The following is a 446-amino-acid chain: Iroquois-class homeodomain protein IRX-6 (446 aa).

The homeobox DNA-binding region spans 146–208 (GAGRRKNATR…NARRRLKKEN (63 aa)). Disordered regions lie at residues 208–273 (NKMT…EDEE) and 362–394 (AVEG…RLSV). The span at 217-226 (KGGEERKAEG) shows a compositional bias: basic and acidic residues. Residues 256–273 (LEDLEEEEEEEEEAEDEE) show a composition bias toward acidic residues.

The protein belongs to the TALE/IRO homeobox family.

Its subcellular location is the nucleus. Its function is as follows. Transcription factor. Binds to the iroquois binding site (IBS) motif of target genes to regulate gene expression; functions as a transcriptional activator or repressor. Modulates expression of RCVRN, VSX1, BHLHE22/BHLHB5 and TACR3/Nk3r. Required downstream of retinal bipolar cell specification for the terminal differentiation of type 2, type 3a and possibly type 6 bipolar cells. This Homo sapiens (Human) protein is Iroquois-class homeodomain protein IRX-6 (IRX6).